Reading from the N-terminus, the 290-residue chain is ATP synthase gamma chain (290 aa).

This sequence belongs to the ATPase gamma chain family. As to quaternary structure, F-type ATPases have 2 components, CF(1) - the catalytic core - and CF(0) - the membrane proton channel. CF(1) has five subunits: alpha(3), beta(3), gamma(1), delta(1), epsilon(1). CF(0) has three main subunits: a, b and c.

It localises to the cell inner membrane. Produces ATP from ADP in the presence of a proton gradient across the membrane. The gamma chain is believed to be important in regulating ATPase activity and the flow of protons through the CF(0) complex. The protein is ATP synthase gamma chain of Dinoroseobacter shibae (strain DSM 16493 / NCIMB 14021 / DFL 12).